The following is a 423-amino-acid chain: Serine hydroxymethyltransferase (423 aa).

(6S)-5,6,7,8-tetrahydrofolate is bound by residues Leu-120 and 124-126 (GHL). Residue Lys-229 is modified to N6-(pyridoxal phosphate)lysine. A (6S)-5,6,7,8-tetrahydrofolate-binding site is contributed by 353–355 (SPF).

This sequence belongs to the SHMT family. As to quaternary structure, homodimer. Pyridoxal 5'-phosphate is required as a cofactor.

The protein resides in the cytoplasm. It carries out the reaction (6R)-5,10-methylene-5,6,7,8-tetrahydrofolate + glycine + H2O = (6S)-5,6,7,8-tetrahydrofolate + L-serine. It functions in the pathway one-carbon metabolism; tetrahydrofolate interconversion. The protein operates within amino-acid biosynthesis; glycine biosynthesis; glycine from L-serine: step 1/1. In terms of biological role, catalyzes the reversible interconversion of serine and glycine with tetrahydrofolate (THF) serving as the one-carbon carrier. This reaction serves as the major source of one-carbon groups required for the biosynthesis of purines, thymidylate, methionine, and other important biomolecules. Also exhibits THF-independent aldolase activity toward beta-hydroxyamino acids, producing glycine and aldehydes, via a retro-aldol mechanism. This Prochlorococcus marinus (strain AS9601) protein is Serine hydroxymethyltransferase.